A 367-amino-acid polypeptide reads, in one-letter code: Phosphoribosylaminoimidazole-succinocarboxamide synthase (367 aa).

This sequence belongs to the SAICAR synthetase family.

It carries out the reaction 5-amino-1-(5-phospho-D-ribosyl)imidazole-4-carboxylate + L-aspartate + ATP = (2S)-2-[5-amino-1-(5-phospho-beta-D-ribosyl)imidazole-4-carboxamido]succinate + ADP + phosphate + 2 H(+). It participates in purine metabolism; IMP biosynthesis via de novo pathway; 5-amino-1-(5-phospho-D-ribosyl)imidazole-4-carboxamide from 5-amino-1-(5-phospho-D-ribosyl)imidazole-4-carboxylate: step 1/2. The sequence is that of Phosphoribosylaminoimidazole-succinocarboxamide synthase from Shewanella baltica (strain OS223).